A 66-amino-acid chain; its full sequence is Beta-mammal toxin Css2 (66 aa).

In terms of domain architecture, LCN-type CS-alpha/beta spans 1-66 (KEGYLVSKST…VWPLPNKTCN (66 aa)). Cystine bridges form between Cys12–Cys65, Cys16–Cys41, Cys25–Cys46, and Cys29–Cys48. Residue Asn66 is modified to Asparagine amide.

It belongs to the long (4 C-C) scorpion toxin superfamily. Sodium channel inhibitor family. Beta subfamily. In terms of processing, C-terminal amidation increases its affinity for sodium channels. In terms of tissue distribution, expressed by the venom gland.

The protein localises to the secreted. Beta toxin that binds site-4 of sodium channels (Nav) and reduces peak current (observed on Nav1.6/SCN8A (IC(50)=307 nM)), shifts the voltage of activation toward more negative potentials (observed on Nav1.6, Nav1.1 (weak), Nav1.2 (weak), and Nav1.7 (weak)), and induces resurgent currents at negative voltages following brief and strong depolarizations (observed on Nav1.6, Nav1.1 (weak), and Nav1.7 (weak)). A reduction of peak current of Nav1.5/SCN7A has been observed in another study (IC(50)=35-40 nM). This toxin is only active on mammals. It has been shown to bind phospholipids. This is Beta-mammal toxin Css2 from Centruroides suffusus (Durango bark scorpion).